The primary structure comprises 67 residues: Conotoxin AbVIN (67 aa).

Residues 1 to 17 (VIIIAVLFLTACQLIAT) form the signal peptide. Positions 18-40 (ASYARSERKHPDLRLSSRNSKLS) are excised as a propeptide. Disulfide bonds link cysteine 43-cysteine 57, cysteine 50-cysteine 61, and cysteine 56-cysteine 66.

This sequence belongs to the conotoxin O1 superfamily. Expressed by the venom duct.

The protein localises to the secreted. The polypeptide is Conotoxin AbVIN (Conus abbreviatus (Abbreviated cone)).